Reading from the N-terminus, the 926-residue chain is Transcriptional activator protein acu-15 (926 aa).

The segment at residues 24–51 is a DNA-binding region (zn(2)-C6 fungal-type); the sequence is CDRCRSKKIRCDGIRPCCSQCANVGFEC. 3 disordered regions span residues 100–129, 602–649, and 667–801; these read KMHS…TPAK, LPQS…SASL, and TPQH…TSTG. Positions 119–129 are enriched in basic and acidic residues; sequence EIKRDSGTPAK. 2 stretches are compositionally biased toward low complexity: residues 623–632 and 669–681; these read AQQGSPSPSA and QHQQ…LQQQ. 2 stretches are compositionally biased toward polar residues: residues 689–703 and 726–736; these read ARSQ…QKAQ and RTSTGTQSTPN. Positions 740 to 792 are enriched in low complexity; the sequence is LSLSSPQSPVSPVQMRSQPHQLQQQQQQQPQPQQQQQQHQRSSIASSHSQQGQ.

The protein localises to the nucleus. Its function is as follows. Positive regulator of acetate induction. In Neurospora crassa (strain ATCC 24698 / 74-OR23-1A / CBS 708.71 / DSM 1257 / FGSC 987), this protein is Transcriptional activator protein acu-15 (acu-15).